Consider the following 1394-residue polypeptide: DNA-directed RNA polymerase subunit beta' (1394 aa).

4 residues coordinate Zn(2+): Cys-71, Cys-73, Cys-86, and Cys-89. Asp-462, Asp-464, and Asp-466 together coordinate Mg(2+). Zn(2+) is bound by residues Cys-810, Cys-884, Cys-891, and Cys-894.

This sequence belongs to the RNA polymerase beta' chain family. The RNAP catalytic core consists of 2 alpha, 1 beta, 1 beta' and 1 omega subunit. When a sigma factor is associated with the core the holoenzyme is formed, which can initiate transcription. Mg(2+) is required as a cofactor. Zn(2+) serves as cofactor.

It carries out the reaction RNA(n) + a ribonucleoside 5'-triphosphate = RNA(n+1) + diphosphate. DNA-dependent RNA polymerase catalyzes the transcription of DNA into RNA using the four ribonucleoside triphosphates as substrates. The chain is DNA-directed RNA polymerase subunit beta' from Caulobacter sp. (strain K31).